The primary structure comprises 356 residues: Histidine biosynthesis bifunctional protein HisB (356 aa).

Positions 1–166 (MSKKVLFIDR…AICNYLTSLN (166 aa)) are histidinol-phosphatase. The active-site Nucleophile is the Asp9. Mg(2+) contacts are provided by Asp9 and Asp11. The Proton donor role is filled by Asp11. Positions 93, 95, 101, and 103 each coordinate Zn(2+). Asp130 is a binding site for Mg(2+). The tract at residues 167 to 356 (RYAHVKRITK…VLPSSKGVLS (190 aa)) is imidazoleglycerol-phosphate dehydratase.

It in the N-terminal section; belongs to the histidinol-phosphatase family. This sequence in the C-terminal section; belongs to the imidazoleglycerol-phosphate dehydratase family. Requires Mg(2+) as cofactor. Zn(2+) is required as a cofactor.

The protein resides in the cytoplasm. It carries out the reaction D-erythro-1-(imidazol-4-yl)glycerol 3-phosphate = 3-(imidazol-4-yl)-2-oxopropyl phosphate + H2O. It catalyses the reaction L-histidinol phosphate + H2O = L-histidinol + phosphate. Its pathway is amino-acid biosynthesis; L-histidine biosynthesis; L-histidine from 5-phospho-alpha-D-ribose 1-diphosphate: step 6/9. The protein operates within amino-acid biosynthesis; L-histidine biosynthesis; L-histidine from 5-phospho-alpha-D-ribose 1-diphosphate: step 8/9. The protein is Histidine biosynthesis bifunctional protein HisB of Baumannia cicadellinicola subsp. Homalodisca coagulata.